The chain runs to 437 residues: ATP-dependent protease ATPase subunit HslU (437 aa).

ATP-binding positions include Val-18, 60 to 65 (GVGKTE), Asp-250, Glu-315, and Arg-387.

It belongs to the ClpX chaperone family. HslU subfamily. A double ring-shaped homohexamer of HslV is capped on each side by a ring-shaped HslU homohexamer. The assembly of the HslU/HslV complex is dependent on binding of ATP.

It is found in the cytoplasm. Its function is as follows. ATPase subunit of a proteasome-like degradation complex; this subunit has chaperone activity. The binding of ATP and its subsequent hydrolysis by HslU are essential for unfolding of protein substrates subsequently hydrolyzed by HslV. HslU recognizes the N-terminal part of its protein substrates and unfolds these before they are guided to HslV for hydrolysis. The protein is ATP-dependent protease ATPase subunit HslU of Desulfovibrio desulfuricans (strain ATCC 27774 / DSM 6949 / MB).